Consider the following 348-residue polypeptide: Protein RecA (348 aa).

65-72 (GPESSGKT) contacts ATP.

It belongs to the RecA family.

The protein resides in the cytoplasm. Its function is as follows. Can catalyze the hydrolysis of ATP in the presence of single-stranded DNA, the ATP-dependent uptake of single-stranded DNA by duplex DNA, and the ATP-dependent hybridization of homologous single-stranded DNAs. It interacts with LexA causing its activation and leading to its autocatalytic cleavage. The chain is Protein RecA from Vibrio anguillarum (strain ATCC 68554 / 775) (Listonella anguillarum).